The sequence spans 99 residues: UPF0213 protein YazA (99 aa).

The GIY-YIG domain maps to 4-79 (NNHFFYVVKC…KKLTRKKKEL (76 aa)).

This sequence belongs to the UPF0213 family.

This is UPF0213 protein YazA (yazA) from Bacillus subtilis (strain 168).